Here is a 78-residue protein sequence, read N- to C-terminus: Pigment-dispersing hormone 1 peptides (78 aa).

The N-terminal stretch at 1–22 (MRSSVIVAVLVVVALAALLTQG) is a signal peptide. An Alanine amide modification is found at Ala-75.

The protein belongs to the arthropod PDH family. Eyestalk sinus gland.

The protein localises to the secreted. Its function is as follows. The pigment-dispersing hormone causes the migration of the distal retinal pigment into the proximal end of the pigment chromatophore cells and thus decreases the amount of light entering the retinulas. May also function as a neurotransmitter and/or neuromodulator. This Callinectes sapidus (Blue crab) protein is Pigment-dispersing hormone 1 peptides (PDH1).